The following is a 147-amino-acid chain: Elongation factor Tu (147 aa).

The protein belongs to the GTP-binding elongation factor family. EF-Tu/EF-1A subfamily. In terms of assembly, monomer.

The protein localises to the cytoplasm. Its function is as follows. This protein promotes the GTP-dependent binding of aminoacyl-tRNA to the A-site of ribosomes during protein biosynthesis. In Fructilactobacillus sanfranciscensis (Lactobacillus sanfranciscensis), this protein is Elongation factor Tu (tuf).